Here is a 645-residue protein sequence, read N- to C-terminus: Threonine--tRNA ligase (645 aa).

The TGS domain occupies Met1–Thr63. The segment at Asp242–Pro540 is catalytic. Residues Cys336, His387, and His517 each coordinate Zn(2+).

This sequence belongs to the class-II aminoacyl-tRNA synthetase family. Homodimer. Zn(2+) is required as a cofactor.

It is found in the cytoplasm. It carries out the reaction tRNA(Thr) + L-threonine + ATP = L-threonyl-tRNA(Thr) + AMP + diphosphate + H(+). Functionally, catalyzes the attachment of threonine to tRNA(Thr) in a two-step reaction: L-threonine is first activated by ATP to form Thr-AMP and then transferred to the acceptor end of tRNA(Thr). Also edits incorrectly charged L-seryl-tRNA(Thr). This is Threonine--tRNA ligase from Staphylococcus aureus (strain bovine RF122 / ET3-1).